A 1017-amino-acid polypeptide reads, in one-letter code: Integrator complex subunit 3 (1017 aa).

The interval 952-1017 (EYEDSSKPPK…KGSAVGSDSD (66 aa)) is disordered. Residues 983-997 (NEEESVSSSASEEED) show a composition bias toward acidic residues.

Belongs to the Integrator subunit 3 family. In terms of assembly, component of the Integrator complex, composed of core subunits INTS1, INTS2, INTS3, INTS4, INTS5, INTS6, INTS7, INTS8, INTS9/RC74, INTS10, INTS11/CPSF3L, INTS12, INTS13, INTS14 and INTS15. The core complex associates with protein phosphatase 2A subunits PPP2CA and PPP2R1A, to form the Integrator-PP2A (INTAC) complex. Component of the SOSS complex.

Its subcellular location is the nucleus. It is found in the cytoplasm. Its function is as follows. Component of the integrator complex, a multiprotein complex that terminates RNA polymerase II (Pol II) transcription in the promoter-proximal region of genes. The integrator complex provides a quality checkpoint during transcription elongation by driving premature transcription termination of transcripts that are unfavorably configured for transcriptional elongation: the complex terminates transcription by (1) catalyzing dephosphorylation of the C-terminal domain (CTD) of Pol II subunit POLR2A/RPB1 and SUPT5H/SPT5, (2) degrading the exiting nascent RNA transcript via endonuclease activity and (3) promoting the release of Pol II from bound DNA. The integrator complex is also involved in terminating the synthesis of non-coding Pol II transcripts, such as enhancer RNAs (eRNAs), small nuclear RNAs (snRNAs), telomerase RNAs and long non-coding RNAs (lncRNAs). Within the integrator complex, INTS3 is involved in the post-termination step: INTS3 binds INTS7 in the open conformation of integrator complex and prevents the rebinding of Pol II to the integrator after termination cycle. Functionally, component of the SOSS complex, a multiprotein complex that functions downstream of the MRN complex to promote DNA repair and G2/M checkpoint. The SOSS complex associates with single-stranded DNA at DNA lesions and influences diverse endpoints in the cellular DNA damage response including cell-cycle checkpoint activation, recombinational repair and maintenance of genomic stability. The SOSS complex is required for efficient homologous recombination-dependent repair of double-strand breaks (DSBs) and ATM-dependent signaling pathways. In the SOSS complex, it is required for the assembly of the complex and for stabilization of the complex at DNA damage sites. This Danio rerio (Zebrafish) protein is Integrator complex subunit 3 (ints3).